A 568-amino-acid polypeptide reads, in one-letter code: Peroxisomal leader peptide-processing protease (568 aa).

Residues 332 to 568 form a serine protease region; sequence TPRGLPLRDL…PLSEVPRSKL (237 aa). Residues H374, D410, and S483 each act as charge relay system in the active site.

The protein belongs to the peptidase S1B family. As to quaternary structure, homodimer. Forms a heterodimer with the C-terminal cleavage product (49 kDa form). Forms a heterodimer with the N-terminal cleavage product (10 kDa form). Interacts with PEX5. Interacts with LONP2. In terms of processing, self-cleavage gives rise to an N-terminal 10-kDa fragment and C-terminal 49-kDa fragment upon import into the peroxisomes. The full-lengh TYSND1 is the active the proteolytic processing of PTS1- and PTS2-proteins and in self-cleavage, and intermolecular self-cleavage of TYSND1 down-regulates its protease activity.

The protein resides in the peroxisome. Inhibited by N-ethylmaleimide (NEM). Not affected by leupeptin or trans-epoxysuccinyl-l-leucylamido-(4-gianidino) butane (E64). Its function is as follows. Peroxisomal protease that mediates both the removal of the leader peptide from proteins containing a PTS2 target sequence and processes several PTS1-containing proteins. Catalyzes the processing of PTS1-proteins involved in the peroxisomal beta-oxidation of fatty acids. The protein is Peroxisomal leader peptide-processing protease (Tysnd1) of Mus musculus (Mouse).